The sequence spans 454 residues: NADP-specific glutamate dehydrogenase (454 aa).

Ser-2 bears the N-acetylserine mark. Lys-114 is an active-site residue.

Belongs to the Glu/Leu/Phe/Val dehydrogenases family. As to quaternary structure, homohexamer.

The catalysed reaction is L-glutamate + NADP(+) + H2O = 2-oxoglutarate + NH4(+) + NADPH + H(+). The sequence is that of NADP-specific glutamate dehydrogenase (GDH) from Neurospora sitophila (Chrysonilia sitophila).